Here is a 182-residue protein sequence, read N- to C-terminus: UPF0690 protein C1orf52 (182 aa).

Disordered regions lie at residues 1 to 67 (MAAE…RSVT) and 100 to 182 (WKSN…KKKK). A compositionally biased stretch (acidic residues) spans 23 to 32 (SDEEDNIEPE). A compositionally biased stretch (basic and acidic residues) spans 50 to 63 (NKAEKRLPGPDELF). Phosphothreonine is present on Thr-67. At Tyr-132 the chain carries Phosphotyrosine. Acidic residues predominate over residues 151-162 (EGEETLESDDEK). Position 158 is a phosphoserine (Ser-158). Over residues 172-182 (VEPGEPAKKKK) the composition is skewed to basic and acidic residues.

Belongs to the UPF0690 family. As to expression, expressed in all tissues tested including heart, placenta, liver, skeletal muscle, kidney and pancreas. Weak expression in brain and lung.

The protein is UPF0690 protein C1orf52 (C1orf52) of Homo sapiens (Human).